A 136-amino-acid chain; its full sequence is Ribosome-binding factor A (136 aa).

Belongs to the RbfA family. As to quaternary structure, monomer. Binds 30S ribosomal subunits, but not 50S ribosomal subunits or 70S ribosomes.

It is found in the cytoplasm. Functionally, one of several proteins that assist in the late maturation steps of the functional core of the 30S ribosomal subunit. Associates with free 30S ribosomal subunits (but not with 30S subunits that are part of 70S ribosomes or polysomes). Required for efficient processing of 16S rRNA. May interact with the 5'-terminal helix region of 16S rRNA. This is Ribosome-binding factor A from Rhodopseudomonas palustris (strain BisB5).